The primary structure comprises 271 residues: Small ribosomal subunit protein uS3 (271 aa).

In terms of domain architecture, KH type-2 spans 40–108; sequence IRKFLKKRLY…TIIVNIVEVR (69 aa). A disordered region spans residues 210 to 271; the sequence is PTRDGVNPRE…RPQRTENKGN (62 aa). Residues 215–247 show a composition bias toward basic and acidic residues; it reads VNPREESRKSDRRDNKRDNRRNDRRGNDRRGND.

The protein belongs to the universal ribosomal protein uS3 family. In terms of assembly, part of the 30S ribosomal subunit. Forms a tight complex with proteins S10 and S14.

Functionally, binds the lower part of the 30S subunit head. Binds mRNA in the 70S ribosome, positioning it for translation. This chain is Small ribosomal subunit protein uS3, found in Clostridioides difficile (strain 630) (Peptoclostridium difficile).